The following is a 298-amino-acid chain: NFU1 iron-sulfur cluster scaffold homolog, mitochondrial (298 aa).

Residues 190–258 (IKELLDTRIR…IPEVESVEQV (69 aa)) are nifU. [4Fe-4S] cluster-binding residues include C227 and C230. A compositionally biased stretch (polar residues) spans 279 to 288 (QKESVNQPNA). The tract at residues 279–298 (QKESVNQPNAPVNIGGGTPN) is disordered.

The protein belongs to the NifU family.

Its subcellular location is the mitochondrion. Molecular scaffold for [Fe-S] cluster assembly of mitochondrial iron-sulfur proteins. In Drosophila virilis (Fruit fly), this protein is NFU1 iron-sulfur cluster scaffold homolog, mitochondrial.